The sequence spans 322 residues: MLNSFKLSLQYILPKLWLTRLAGWGASKRAGWLTKLVIDLFVKYYKVDMTEAQKPDTASYRTFNDFFVRPLRDDVRPLNTDPNILVMPADGVISQLGRIEEDKILQAKGHNYSLEALLAGNYLMADKFRNGTFVTTYLSPRDYHRVHMPCNGILREMIYVPGDLFSVNHLTAQNVPNLFARNERVICLFDTEFGPMAQILVGATIVGSIETVWAGTITPPREGIIKRWTWPEGEHEGSVALLKGQEMGRFKLGSTVINLFAPGKVNLIASLASLSVTKIGQPLATSTETFVAPEVEPAPLPAEEIKAEHDASPLVDNKKDDT.

Residues Asp-90, His-147, and Ser-254 each act as charge relay system; for autoendoproteolytic cleavage activity in the active site. Ser-254 acts as the Schiff-base intermediate with substrate; via pyruvic acid; for decarboxylase activity in catalysis. A Pyruvic acid (Ser); by autocatalysis modification is found at Ser-254. The segment at 296–322 (EPAPLPAEEIKAEHDASPLVDNKKDDT) is disordered. The span at 303-322 (EEIKAEHDASPLVDNKKDDT) shows a compositional bias: basic and acidic residues.

It belongs to the phosphatidylserine decarboxylase family. PSD-B subfamily. Prokaryotic type I sub-subfamily. Heterodimer of a large membrane-associated beta subunit and a small pyruvoyl-containing alpha subunit. The cofactor is pyruvate. Is synthesized initially as an inactive proenzyme. Formation of the active enzyme involves a self-maturation process in which the active site pyruvoyl group is generated from an internal serine residue via an autocatalytic post-translational modification. Two non-identical subunits are generated from the proenzyme in this reaction, and the pyruvate is formed at the N-terminus of the alpha chain, which is derived from the carboxyl end of the proenzyme. The autoendoproteolytic cleavage occurs by a canonical serine protease mechanism, in which the side chain hydroxyl group of the serine supplies its oxygen atom to form the C-terminus of the beta chain, while the remainder of the serine residue undergoes an oxidative deamination to produce ammonia and the pyruvoyl prosthetic group on the alpha chain. During this reaction, the Ser that is part of the protease active site of the proenzyme becomes the pyruvoyl prosthetic group, which constitutes an essential element of the active site of the mature decarboxylase.

Its subcellular location is the cell membrane. It carries out the reaction a 1,2-diacyl-sn-glycero-3-phospho-L-serine + H(+) = a 1,2-diacyl-sn-glycero-3-phosphoethanolamine + CO2. Its pathway is phospholipid metabolism; phosphatidylethanolamine biosynthesis; phosphatidylethanolamine from CDP-diacylglycerol: step 2/2. In terms of biological role, catalyzes the formation of phosphatidylethanolamine (PtdEtn) from phosphatidylserine (PtdSer). This chain is Phosphatidylserine decarboxylase proenzyme, found in Salmonella dublin (strain CT_02021853).